The sequence spans 223 residues: uncharacterized protein (223 aa).

The Response regulatory domain maps to arginine 5–leucine 116. Residue aspartate 52 is modified to 4-aspartylphosphate. A DNA-binding region (ompR/PhoB-type) is located at residues glycine 121–threonine 219.

Post-translationally, phosphorylated by YbdK.

It localises to the cytoplasm. Its function is as follows. Member of the two-component regulatory system YbdK/YbdJ. This is an uncharacterized protein from Bacillus subtilis (strain 168).